Consider the following 69-residue polypeptide: Rubredoxin-1 (69 aa).

One can recognise a Rubredoxin-like domain in the interval 14–69 (QASWMCAECGYIYDPAEGNLETNIRPGMPFDKLPDDWSCPVCNHPKNQFTKFISQL). Positions 19, 22, 52, and 55 each coordinate Fe cation.

It belongs to the rubredoxin family. In terms of assembly, monomer. The cofactor is Fe(3+).

Serves as an electron acceptor for pyruvate ferredoxin oxidoreductase (PFOR). The sequence is that of Rubredoxin-1 (rub1) from Chlorobaculum tepidum (strain ATCC 49652 / DSM 12025 / NBRC 103806 / TLS) (Chlorobium tepidum).